A 397-amino-acid polypeptide reads, in one-letter code: Putative F-box protein At1g26510 (397 aa).

Positions 1-23 are disordered; it reads MRTRSKKTKTVNNNNDLQKSEEK. The F-box domain maps to 24–71; the sequence is QKFDQLPLDLEIEMFRRLPLKSVARFLTLSKSCATTIRSPSFITSFPS.

In Arabidopsis thaliana (Mouse-ear cress), this protein is Putative F-box protein At1g26510.